We begin with the raw amino-acid sequence, 1404 residues long: G8 domain-containing protein DDB_G0286897 (1404 aa).

Residues 1–20 (MNYFKYFIFVVFLFFTIVKC) form the signal peptide. Transmembrane regions (helical) follow at residues 97 to 117 (LVGF…GLFA) and 128 to 148 (IIIL…IQSI). Residues Asn352, Asn365, Asn413, Asn481, Asn639, Asn838, Asn979, Asn1003, Asn1017, Asn1253, and Asn1334 are each glycosylated (N-linked (GlcNAc...) asparagine). Residues 553–679 (STWASGFVPL…YHNTWTKLST (127 aa)) form the G8 domain.

The protein belongs to the comF family.

It is found in the membrane. The polypeptide is G8 domain-containing protein DDB_G0286897 (Dictyostelium discoideum (Social amoeba)).